Reading from the N-terminus, the 334-residue chain is Ephrin-B1 (334 aa).

A signal peptide spans 1 to 25 (MARPRGGRWLLGVLLALCRLAAPLA). The 135-residue stretch at 26–160 (KSLEPVSWSA…TRSMKIVMKV (135 aa)) folds into the Ephrin RBD domain. Over 26 to 231 (KSLEPVSWSA…FLSSKVAVFA (206 aa)) the chain is Extracellular. Disulfide bonds link Cys-60/Cys-97 and Cys-85/Cys-149. N-linked (GlcNAc...) asparagine glycosylation is present at Asn-135. The interval 175–218 (SRPSKEADNTVKIVTQSPRHKVPTVEEPGKPGSVNQNGQETQGP) is disordered. Residues 207–218 (SVNQNGQETQGP) are compositionally biased toward polar residues. Residues 232–252 (AIGAGCVIFILIIIFLVVLLI) form a helical membrane-spanning segment. Topologically, residues 253 to 334 (KIRKRHRKHT…QSPANIYYKV (82 aa)) are cytoplasmic. The short motif at 332-334 (YKV) is the PDZ-binding element.

This sequence belongs to the ephrin family. In terms of assembly, binds to the receptor tyrosine kinase EPHB2. Interacts with GRIP1 and GRIP2. In terms of processing, inducible phosphorylation of tyrosine residues in the cytoplasmic domain.

It localises to the membrane. Functionally, cell surface transmembrane ligand for Eph receptors, a family of receptor tyrosine kinases which are crucial for migration, repulsion and adhesion during neuronal, vascular and epithelial development. Binds promiscuously Eph receptors residing on adjacent cells, leading to contact-dependent bidirectional signaling into neighboring cells. The signaling pathway downstream of the receptor is referred to as forward signaling while the signaling pathway downstream of the ephrin ligand is referred to as reverse signaling. This chain is Ephrin-B1 (EFNB1), found in Gallus gallus (Chicken).